A 118-amino-acid chain; its full sequence is Large ribosomal subunit protein uL18 (118 aa).

The segment at Met-1–Gly-24 is disordered. Residues Ile-10–Gly-20 are compositionally biased toward basic residues.

Belongs to the universal ribosomal protein uL18 family. In terms of assembly, part of the 50S ribosomal subunit; part of the 5S rRNA/L5/L18/L25 subcomplex. Contacts the 5S and 23S rRNAs.

Functionally, this is one of the proteins that bind and probably mediate the attachment of the 5S RNA into the large ribosomal subunit, where it forms part of the central protuberance. The sequence is that of Large ribosomal subunit protein uL18 from Streptococcus agalactiae serotype III (strain NEM316).